We begin with the raw amino-acid sequence, 284 residues long: Nodulation protein O (284 aa).

The disordered stretch occupies residues 1–27 (MNIKGSDNGSFIKGSPENDIIDGGKKN). Hemolysin-type calcium-binding repeat units follow at residues 13–30 (KGSP…NDWI), 31–48 (DAGN…QDSI), 58–75 (WAGK…DDLL), 94–111 (HSGE…SDIL), and 112–129 (VAGD…GDAF). Ca(2+)-binding residues include Asp-100, Asp-109, Asp-118, and Asp-127. Residues 208-222 (DRGFASAAAAATAID) form an export signal (aspartic acid box) region.

The protein localises to the secreted. In terms of biological role, the NodO protein may play a role in nodule development by direct interaction with the root hair cells or some other plant surface in a calcium-dependent manner. In Rhizobium leguminosarum bv. viciae, this protein is Nodulation protein O (nodO).